The following is a 542-amino-acid chain: Polysialoglycoprotein (542 aa).

A signal peptide spans 1–21 (MIMGGVRELLLVVMTVGVVKV). Positions 22–120 (SCYPVGKSQK…TSEAATGPSG (99 aa)) are excised as a propeptide. The segment at 70-542 (EEYLETNEVE…GPSGDDAMDI (473 aa)) is disordered. Positions 78-95 (VESQASPNHGSSPANDAL) are enriched in polar residues. A compositionally biased stretch (basic and acidic residues) spans 97–106 (SEEKLRRVSS). The segment covering 107–116 (DDAATSEAAT) has biased composition (low complexity). 32 tandem repeats follow at residues 121-133 (DDAT…GPSG), 134-146 (DDAT…GPSG), 147-159 (DDAT…GPSG), 160-172 (DDAT…GPSG), 173-185 (DDAT…GPSG), 186-198 (DDAT…GPSG), 199-211 (DDAT…GPSG), 212-224 (DDAT…GPSG), 225-237 (DDAT…GPSG), 238-250 (DDAT…GPSG), 251-263 (DDAT…GPSG), 264-276 (DDAT…GPSG), 277-289 (DDAT…GPSG), 290-302 (DDAT…GPSG), 303-315 (DDAT…GPSG), 316-328 (DDAT…GPSG), 329-341 (DDAT…GPSG), 342-354 (DDAT…GPSG), 355-367 (DDAT…GPSG), 368-380 (DDAT…GPSG), 381-393 (DDAT…GPSG), 394-406 (DDAT…GPSG), 407-419 (DDAT…GPSG), 420-432 (DDAT…GPSG), 433-445 (DDAT…GPSG), 446-458 (DDAT…GPSG), 459-471 (DDAT…GPSG), 472-484 (DDAT…GPSG), 485-497 (DDAT…GPSG), 498-510 (DDAT…GPSG), 511-523 (DDAT…GPSG), and 524-536 (DDAT…GPSG). A 32 X 13 AA tandem repeats of D-D-A-T-S-E-A-A-T-G-P-S-G region spans residues 121 to 536 (DDATSEAATG…TSEAATGPSG (416 aa)). A glycan (O-linked (GalNAc...) threonine) is linked at threonine 124. O-linked (GalNAc...) serine glycosylation occurs at serine 125. O-linked (GalNAc...) threonine glycans are attached at residues threonine 129 and threonine 137. Residue serine 138 is glycosylated (O-linked (GalNAc...) serine). 2 O-linked (GalNAc...) threonine glycosylation sites follow: threonine 142 and threonine 150. O-linked (GalNAc...) serine glycosylation is present at serine 151. Threonine 155 and threonine 163 each carry an O-linked (GalNAc...) threonine glycan. A glycan (O-linked (GalNAc...) serine) is linked at serine 164. Residues threonine 168 and threonine 176 are each glycosylated (O-linked (GalNAc...) threonine). The O-linked (GalNAc...) serine glycan is linked to serine 177. 2 O-linked (GalNAc...) threonine glycosylation sites follow: threonine 181 and threonine 189. The O-linked (GalNAc...) serine glycan is linked to serine 190. O-linked (GalNAc...) threonine glycosylation is found at threonine 194 and threonine 202. An O-linked (GalNAc...) serine glycan is attached at serine 203. O-linked (GalNAc...) threonine glycans are attached at residues threonine 207 and threonine 215. Serine 216 carries an O-linked (GalNAc...) serine glycan. Residues threonine 220 and threonine 228 are each glycosylated (O-linked (GalNAc...) threonine). A glycan (O-linked (GalNAc...) serine) is linked at serine 229. O-linked (GalNAc...) threonine glycans are attached at residues threonine 233 and threonine 241. Serine 242 carries an O-linked (GalNAc...) serine glycan. O-linked (GalNAc...) threonine glycosylation is found at threonine 246 and threonine 254. Serine 255 carries O-linked (GalNAc...) serine glycosylation. Threonine 259 and threonine 267 each carry an O-linked (GalNAc...) threonine glycan. Serine 268 carries O-linked (GalNAc...) serine glycosylation. 2 O-linked (GalNAc...) threonine glycosylation sites follow: threonine 272 and threonine 280. Serine 281 carries an O-linked (GalNAc...) serine glycan. O-linked (GalNAc...) threonine glycans are attached at residues threonine 285 and threonine 293. Serine 294 carries O-linked (GalNAc...) serine glycosylation. Threonine 298 and threonine 306 each carry an O-linked (GalNAc...) threonine glycan. Serine 307 carries an O-linked (GalNAc...) serine glycan. 2 O-linked (GalNAc...) threonine glycosylation sites follow: threonine 311 and threonine 319. O-linked (GalNAc...) serine glycosylation occurs at serine 320. O-linked (GalNAc...) threonine glycosylation is found at threonine 324 and threonine 332. O-linked (GalNAc...) serine glycosylation is present at serine 333. 2 O-linked (GalNAc...) threonine glycosylation sites follow: threonine 337 and threonine 345. An O-linked (GalNAc...) serine glycan is attached at serine 346. Residues threonine 350 and threonine 358 are each glycosylated (O-linked (GalNAc...) threonine). Serine 359 carries O-linked (GalNAc...) serine glycosylation. 2 O-linked (GalNAc...) threonine glycosylation sites follow: threonine 363 and threonine 371. Serine 372 carries an O-linked (GalNAc...) serine glycan. 2 O-linked (GalNAc...) threonine glycosylation sites follow: threonine 376 and threonine 384. O-linked (GalNAc...) serine glycosylation is present at serine 385. O-linked (GalNAc...) threonine glycosylation is found at threonine 389 and threonine 397. Serine 398 carries O-linked (GalNAc...) serine glycosylation. Residues threonine 402 and threonine 410 are each glycosylated (O-linked (GalNAc...) threonine). A glycan (O-linked (GalNAc...) serine) is linked at serine 411. 2 O-linked (GalNAc...) threonine glycosylation sites follow: threonine 415 and threonine 423. Serine 424 carries O-linked (GalNAc...) serine glycosylation. Residues threonine 428 and threonine 436 are each glycosylated (O-linked (GalNAc...) threonine). O-linked (GalNAc...) serine glycosylation is present at serine 437. O-linked (GalNAc...) threonine glycans are attached at residues threonine 441 and threonine 449. Serine 450 carries O-linked (GalNAc...) serine glycosylation. 2 O-linked (GalNAc...) threonine glycosylation sites follow: threonine 454 and threonine 462. Serine 463 is a glycosylation site (O-linked (GalNAc...) serine). Residues threonine 467 and threonine 475 are each glycosylated (O-linked (GalNAc...) threonine). Serine 476 carries an O-linked (GalNAc...) serine glycan. 2 O-linked (GalNAc...) threonine glycosylation sites follow: threonine 480 and threonine 488. A glycan (O-linked (GalNAc...) serine) is linked at serine 489. Threonine 493 and threonine 501 each carry an O-linked (GalNAc...) threonine glycan. Serine 502 carries O-linked (GalNAc...) serine glycosylation. O-linked (GalNAc...) threonine glycans are attached at residues threonine 506 and threonine 514. Serine 515 carries an O-linked (GalNAc...) serine glycan. O-linked (GalNAc...) threonine glycosylation is found at threonine 519 and threonine 527. An O-linked (GalNAc...) serine glycan is attached at serine 528. O-linked (GalNAc...) threonine glycosylation occurs at threonine 532. Residues 537–542 (DDAMDI) constitute a propeptide that is removed on maturation.

Most sialic acid residues exist in the form of polysialyl groups partly capped with deaminoneuraminic acid. Cortical alveoli of immature ovaries.

In response to egg activation, PSGP is discharged by exocytosis into the perivitelline space, where it undergoes rapid proteolysis into glycotridecapeptides. During fertilization and/or early development the glycotridecapeptides prevent polyspermy or are involved in the formation of a fertilization membrane. This Oncorhynchus mykiss (Rainbow trout) protein is Polysialoglycoprotein.